The chain runs to 151 residues: Large ribosomal subunit protein bL9 (151 aa).

This sequence belongs to the bacterial ribosomal protein bL9 family.

In terms of biological role, binds to the 23S rRNA. In Lactobacillus delbrueckii subsp. bulgaricus (strain ATCC 11842 / DSM 20081 / BCRC 10696 / JCM 1002 / NBRC 13953 / NCIMB 11778 / NCTC 12712 / WDCM 00102 / Lb 14), this protein is Large ribosomal subunit protein bL9.